A 249-amino-acid chain; its full sequence is Uridylate kinase (249 aa).

16-19 (KLSG) lines the ATP pocket. Gly-57 is a UMP binding site. ATP contacts are provided by Gly-58 and Arg-62. UMP is bound by residues Asp-77 and 138–145 (AGMPYFST). Residues Asn-166, Tyr-172, and Asp-175 each contribute to the ATP site.

The protein belongs to the UMP kinase family. Homohexamer.

The protein localises to the cytoplasm. The catalysed reaction is UMP + ATP = UDP + ADP. Its pathway is pyrimidine metabolism; CTP biosynthesis via de novo pathway; UDP from UMP (UMPK route): step 1/1. With respect to regulation, inhibited by UTP. Catalyzes the reversible phosphorylation of UMP to UDP. The sequence is that of Uridylate kinase from Bifidobacterium adolescentis (strain ATCC 15703 / DSM 20083 / NCTC 11814 / E194a).